The chain runs to 449 residues: Probable cysteine proteinase 224L (449 aa).

Active-site residues include Cys99, His292, and Asn322. The helical transmembrane segment at 429 to 449 (DTQIVFIFFLSVVILFIFIIL) threads the bilayer.

The protein belongs to the peptidase C1 family.

The protein localises to the membrane. In terms of biological role, probable cysteine protease. This chain is Probable cysteine proteinase 224L, found in Acheta domesticus (House cricket).